Consider the following 289-residue polypeptide: MKKELMLRCANNFVLQNSVCLLGFLRLVKSHLTGRVGIIKARSFKGKRTNCTSTCVHLNNMEVTYLSQSLAQTIDNELMSDDVGYTTEQLMELAGLSIAQIICREYSFDKFKKILIFCGPGNNGGDGLVAARHLKQFGYDITVAYPKENTKVLFQRLLNLLHHYHVPVVKSATGEDIKMYDLVVDALFGFSFRGEPRSPFDEIIHMINQSNKPVVSVDVPSGINIDGDTAGTALSVNSEMNISLMLPKEGVRHYRKKHYLGGRFIPNSIVEKYNLKIPQFTGDNSYVQL.

Residues 71 to 277 (AQTIDNELMS…SIVEKYNLKI (207 aa)) form the YjeF N-terminal domain. 122-126 (NNGGD) contributes to the (6S)-NADPHX binding site. Positions 123 and 185 each coordinate K(+). (6S)-NADPHX contacts are provided by residues 189–195 (GFSFRGE) and aspartate 218. Residue serine 221 coordinates K(+).

It belongs to the NnrE/AIBP family. K(+) is required as a cofactor.

It carries out the reaction (6R)-NADHX = (6S)-NADHX. The enzyme catalyses (6R)-NADPHX = (6S)-NADPHX. Functionally, catalyzes the epimerization of the S- and R-forms of NAD(P)HX, a damaged form of NAD(P)H that is a result of enzymatic or heat-dependent hydration. This is a prerequisite for the S-specific NAD(P)H-hydrate dehydratase to allow the repair of both epimers of NAD(P)HX. The polypeptide is NAD(P)H-hydrate epimerase (Plasmodium knowlesi (strain H)).